Reading from the N-terminus, the 87-residue chain is MAKEELLELDGIVDEVLPDSKYRVTLENGVVVGAYASGRMRKNHIRILAGDRVTLELSVYDLTKGRINFRHKDANSPRPPRAGQARR.

The region spanning 1 to 72 (MAKEELLELD…TKGRINFRHK (72 aa)) is the S1-like domain.

It belongs to the IF-1 family. In terms of assembly, component of the 30S ribosomal translation pre-initiation complex which assembles on the 30S ribosome in the order IF-2 and IF-3, IF-1 and N-formylmethionyl-tRNA(fMet); mRNA recruitment can occur at any time during PIC assembly.

The protein resides in the cytoplasm. In terms of biological role, one of the essential components for the initiation of protein synthesis. Stabilizes the binding of IF-2 and IF-3 on the 30S subunit to which N-formylmethionyl-tRNA(fMet) subsequently binds. Helps modulate mRNA selection, yielding the 30S pre-initiation complex (PIC). Upon addition of the 50S ribosomal subunit IF-1, IF-2 and IF-3 are released leaving the mature 70S translation initiation complex. This chain is Translation initiation factor IF-1 2, found in Burkholderia vietnamiensis (strain G4 / LMG 22486) (Burkholderia cepacia (strain R1808)).